A 116-amino-acid polypeptide reads, in one-letter code: Large ribosomal subunit protein bL17 (116 aa).

The protein belongs to the bacterial ribosomal protein bL17 family. In terms of assembly, part of the 50S ribosomal subunit. Contacts protein L32.

The sequence is that of Large ribosomal subunit protein bL17 from Acaryochloris marina (strain MBIC 11017).